We begin with the raw amino-acid sequence, 486 residues long: MEMKTHYIDGAMYIGCSEEHFTTYNPANGEPLANIKQANQSDMEAAIESAKRGFEVWSAMTAIERSRILNKAVAILRERNDELAALEVADTGKPIQEAIAVDITTGADVIEYYAGLAPSLQGEQQPLNENQFFYTRREPLGICAGIGAWNYPIQIAMWKSAPALAAGNAMIFKPSEETPLTALKLAEIYSEAGLPDGVFNVVQGDYRVGQMLTAHPDIAKVSFTGESGTGKVVMGDSAKTLKQVTMELGGKSPLIVFDDAKLDDAVSAAMVANFYTQGEVCTNGTRVFVHESIYDDFVAQLKTRTEKLVVGDPLDENTQIGALISKEHESKVLSAIESAKASGATLLTGGYKVTDNGLQNGNFVAPTVFIDCDDSMSHVQQEIFGPVMSVLKFSEEAEVIERANDTDYGLAAGVFTQNLSRAHRVIHKIQAGICWVNAWGDSPAEMPVGGYKQSGIGRENGVETLKHYTQTKSVLVQLSDFESPYA.

K(+) is bound by residues Thr-23 and Asp-90. Residue Gly-147–Trp-149 coordinates NAD(+). Lys-159 acts as the Charge relay system in catalysis. NAD(+) contacts are provided by residues Lys-173 to Glu-176 and Glu-226 to Thr-229. Residue Leu-241 coordinates K(+). Glu-247 functions as the Proton acceptor in the catalytic mechanism. The NAD(+) site is built by Gly-249, Cys-281, and Glu-382. Residue Cys-281 is the Nucleophile of the active site. Cysteine sulfenic acid (-SOH) is present on Cys-281. Positions 452 and 455 each coordinate K(+). Glu-459 functions as the Charge relay system in the catalytic mechanism.

The protein belongs to the aldehyde dehydrogenase family. Dimer of dimers. It depends on K(+) as a cofactor.

The enzyme catalyses betaine aldehyde + NAD(+) + H2O = glycine betaine + NADH + 2 H(+). The protein operates within amine and polyamine biosynthesis; betaine biosynthesis via choline pathway; betaine from betaine aldehyde: step 1/1. Its function is as follows. Involved in the biosynthesis of the osmoprotectant glycine betaine. Catalyzes the irreversible oxidation of betaine aldehyde to the corresponding acid. This Vibrio parahaemolyticus serotype O3:K6 (strain RIMD 2210633) protein is Betaine aldehyde dehydrogenase.